Here is a 382-residue protein sequence, read N- to C-terminus: Dual-specificity RNA methyltransferase RlmN (382 aa).

Catalysis depends on Glu-94, which acts as the Proton acceptor. One can recognise a Radical SAM core domain in the interval 100–336; the sequence is EANRGTLCVS…NTITRKTRGD (237 aa). Cys-107 and Cys-342 are disulfide-bonded. The [4Fe-4S] cluster site is built by Cys-114, Cys-118, and Cys-121. S-adenosyl-L-methionine-binding positions include 168-169, Ser-200, 222-224, and Asn-299; these read GE and SLH. Cys-342 (S-methylcysteine intermediate) is an active-site residue.

This sequence belongs to the radical SAM superfamily. RlmN family. The cofactor is [4Fe-4S] cluster.

It localises to the cytoplasm. It catalyses the reaction adenosine(2503) in 23S rRNA + 2 reduced [2Fe-2S]-[ferredoxin] + 2 S-adenosyl-L-methionine = 2-methyladenosine(2503) in 23S rRNA + 5'-deoxyadenosine + L-methionine + 2 oxidized [2Fe-2S]-[ferredoxin] + S-adenosyl-L-homocysteine. The enzyme catalyses adenosine(37) in tRNA + 2 reduced [2Fe-2S]-[ferredoxin] + 2 S-adenosyl-L-methionine = 2-methyladenosine(37) in tRNA + 5'-deoxyadenosine + L-methionine + 2 oxidized [2Fe-2S]-[ferredoxin] + S-adenosyl-L-homocysteine. Functionally, specifically methylates position 2 of adenine 2503 in 23S rRNA and position 2 of adenine 37 in tRNAs. m2A2503 modification seems to play a crucial role in the proofreading step occurring at the peptidyl transferase center and thus would serve to optimize ribosomal fidelity. The protein is Dual-specificity RNA methyltransferase RlmN of Legionella pneumophila (strain Lens).